Here is a 71-residue protein sequence, read N- to C-terminus: Small ribosomal subunit protein bS18c (71 aa).

This sequence belongs to the bacterial ribosomal protein bS18 family. Part of the 30S ribosomal subunit.

The protein resides in the plastid. Its subcellular location is the chloroplast. This is Small ribosomal subunit protein bS18c (rps18) from Mesostigma viride (Green alga).